We begin with the raw amino-acid sequence, 174 residues long: MRCPICHFPETDVIDTRKLYEGEVIRRRRKCRACGRRFTTYERIESVSLMVVKKDGTREPYDREKIARGVRTACYRRPVSADAIEQLVNEVETAVMATDQQEISSQFIGDAVMRRLRDLDEVAYIRFASVYRSFADIGKLREAVDELLEREGTRNGHSSAATTDQGTTDNHSRM.

A zinc finger lies at 3–34 (CPICHFPETDVIDTRKLYEGEVIRRRRKCRAC). An ATP-cone domain is found at 49-139 (LMVVKKDGTR…VYRSFADIGK (91 aa)). Residues 151–174 (EGTRNGHSSAATTDQGTTDNHSRM) form a disordered region. The segment covering 155–174 (NGHSSAATTDQGTTDNHSRM) has biased composition (polar residues).

It belongs to the NrdR family. Requires Zn(2+) as cofactor.

Its function is as follows. Negatively regulates transcription of bacterial ribonucleotide reductase nrd genes and operons by binding to NrdR-boxes. The sequence is that of Transcriptional repressor NrdR from Chloroflexus aggregans (strain MD-66 / DSM 9485).